The following is a 158-amino-acid chain: Large ribosomal subunit protein uL11 (158 aa).

It belongs to the universal ribosomal protein uL11 family. Part of the ribosomal stalk of the 50S ribosomal subunit. Interacts with L10 and the large rRNA to form the base of the stalk. L10 forms an elongated spine to which L12 dimers bind in a sequential fashion forming a multimeric L10(L12)X complex.

In terms of biological role, forms part of the ribosomal stalk which helps the ribosome interact with GTP-bound translation factors. This is Large ribosomal subunit protein uL11 from Methanoculleus marisnigri (strain ATCC 35101 / DSM 1498 / JR1).